We begin with the raw amino-acid sequence, 658 residues long: Aminopeptidase P1 (658 aa).

A peptide contacts are provided by arginine 69 and histidine 436. Positions 456, 467, and 530 each coordinate Mn(2+). A peptide is bound by residues histidine 530, histidine 539, and glutamate 563. Glutamate 563 and glutamate 577 together coordinate Mn(2+).

This sequence belongs to the peptidase M24B family. In terms of assembly, homodimer. Interacts with N-1-naphthylphthalamic acid (NPA). Interacts with NBCL/BOP2/COCH around the plasma membrane and in the nucleus; this interaction disturbs its regulation of the nuclear transcription factor Y subunit (NF-YA1). Requires Mn(2+) as cofactor. Zn(2+) serves as cofactor. Expressed at similar levels in shoot apical meristems (SAM), root meristems (RM), root apical meristems (RAM), roots and leaves and, to a slightly lesser degree, in root nodules.

Its subcellular location is the nucleus. The protein localises to the cytoplasm. The protein resides in the cell membrane. It localises to the microsome membrane. The enzyme catalyses Release of any N-terminal amino acid, including proline, that is linked to proline, even from a dipeptide or tripeptide.. In terms of biological role, catalyzes the removal of a penultimate prolyl residue from the N-termini of peptides, such as Arg-Pro-Pro. Aminopeptidase that binds to the auxin transport inhibitor N-1-naphthylphthalamic acid (NPA). May play a negative role in the regulation of PIN auxin transport proteins. Involved in the coordination of the symbiotic nodule developmental program; prevents the formation of root nodules by regulating the expression of the nuclear transcription factor Y subunit (NF-YA1), a key nodulin. The polypeptide is Aminopeptidase P1 (Lotus japonicus (Lotus corniculatus var. japonicus)).